The sequence spans 205 residues: Small ribosomal subunit protein uS4 (205 aa).

The disordered stretch occupies residues 26–47 (PVNKREYGPGQHGQRRKQKPSD). The S4 RNA-binding domain occupies 94 to 154 (RRLDAVVYRL…EKSKHLAIVL (61 aa)).

It belongs to the universal ribosomal protein uS4 family. Part of the 30S ribosomal subunit. Contacts protein S5. The interaction surface between S4 and S5 is involved in control of translational fidelity.

In terms of biological role, one of the primary rRNA binding proteins, it binds directly to 16S rRNA where it nucleates assembly of the body of the 30S subunit. Its function is as follows. With S5 and S12 plays an important role in translational accuracy. This chain is Small ribosomal subunit protein uS4, found in Gluconacetobacter diazotrophicus (strain ATCC 49037 / DSM 5601 / CCUG 37298 / CIP 103539 / LMG 7603 / PAl5).